Consider the following 1728-residue polypeptide: Mitochondrial 3' processome subunit 1 (1728 aa).

The N-terminal 117 residues, 1-117 (MRRLILSQTL…AGKMTGSSRF (117 aa)), are a transit peptide targeting the mitochondrion. 3 disordered regions span residues 45 to 71 (HRKR…SGDG), 88 to 156 (ESPV…IGQQ), and 829 to 863 (GCNR…PKGT).

In terms of assembly, component of the mitochondrial 3' processome (MPsome) complex composed at least of terminal uridylyltransferase KRET1/TUT1, 3'-5' exonuclease DSS1, MPSS1, MPSS2 and MPSS3. Within the complex, interacts with KRET1.

It localises to the mitochondrion. In terms of biological role, as part of the mitochondrial 3' processome (MPsome), involved in the maturation of guided RNA (gRNA) precursors. The polypeptide is Mitochondrial 3' processome subunit 1 (Trypanosoma brucei brucei).